We begin with the raw amino-acid sequence, 428 residues long: Spliceosome RNA helicase DDX39B (428 aa).

Positions 1–19 are enriched in acidic residues; that stretch reads MAENDVDNELLDYEDDEVE. The disordered stretch occupies residues 1–31; it reads MAENDVDNELLDYEDDEVETAAGGDGAEAPA. Ala-2 bears the N-acetylalanine mark. Lys-36 is modified (N6-acetyllysine; alternate). Residue Lys-36 forms a Glycyl lysine isopeptide (Lys-Gly) (interchain with G-Cter in SUMO2); alternate linkage. Ser-38 and Ser-41 each carry phosphoserine. Residues 45 to 73 carry the Q motif motif; sequence SGFRDFLLKPELLRAIVDCGFEHPSEVQH. Positions 76–249 constitute a Helicase ATP-binding domain; sequence IPQAILGMDV…RKFMQDPMEI (174 aa). An ATP-binding site is contributed by 89–96; that stretch reads AKSGMGKT. Thr-172 bears the Phosphothreonine mark. Positions 196 to 199 match the DECD box motif; that stretch reads DECD. One can recognise a Helicase C-terminal domain in the interval 261–422; the sequence is GLQQYYVKLK…ELPDEIDISS (162 aa).

The protein belongs to the DEAD box helicase family. DECD subfamily. In terms of assembly, homodimer, and heterodimer with DDX39A. DDX39B interacts with the THO subcomplex to form the THO-DDX39B complex which multimerizes into a 28-subunit tetrameric assembly. Component of the transcription/export (TREX) complex at least composed of ALYREF/THOC4, DDX39B, SARNP/CIP29, CHTOP and the THO subcomplex; in the complex interacts with THOC2. THOC1-THOC2-THOC3-DDX39B subcomplex is sufficient for the interaction with export factor NXF1-NXT1. TREX seems to have a dynamic structure involving ATP-dependent remodeling. Within the TREX complex bridges ALYREF/THOC4 and the THO subcomplex, and, in a ATP-dependent manner, ALYREF/THOC4 and SARNP/CIP29. Component of the spliceosome. Interacts directly with U2AF2. Interacts with RBM8A, RNPS1 and SRRM1, FYTTD1/UIF, THOC1, MX1 and POLDIP3. Interacts with LUZP4. Interacts with SARNP/CIP29 (via the C-terminal domain); the interaction is direct and facilitates RNA binding of DDX39B. (Microbial infection) Interacts with human cytomegalovirus/HHV-5 protein UL69.

The protein resides in the nucleus. Its subcellular location is the nucleus speckle. It is found in the cytoplasm. The enzyme catalyses ATP + H2O = ADP + phosphate + H(+). Its function is as follows. Involved in nuclear export of spliced and unspliced mRNA. Component of the TREX complex which is thought to couple mRNA transcription, processing and nuclear export, and specifically associates with spliced mRNA and not with unspliced pre-mRNA. The TREX complex is recruited to spliced mRNAs by a transcription-independent mechanism, binds to mRNA upstream of the exon-junction complex (EJC) and is recruited in a splicing- and cap-dependent manner to a region near the 5' end of the mRNA where it functions in mRNA export to the cytoplasm via the TAP/NXF1 pathway. The THOC1-THOC2-THOC3 core complex alone is sufficient to promote ATPase activity of DDX39B; in the complex THOC2 is the only component that directly interacts with DDX39B. Associates with SARNP/CIP29, which facilitates RNA binding of DDX39B and likely plays a role in mRNA export. May undergo several rounds of ATP hydrolysis during assembly of TREX to drive subsequent loading of components such as ALYREF/THOC4 and CHTOP onto mRNA. Also associates with pre-mRNA independent of ALYREF/THOC4. Involved in the nuclear export of intronless mRNA; the ATP-bound form is proposed to recruit export adapter ALYREF/THOC4 to intronless mRNA; its ATPase activity is cooperatively stimulated by RNA and ALYREF/THOC4 and ATP hydrolysis is thought to trigger the dissociation from RNA to allow the association of ALYREF/THOC4 and the NXF1-NXT1 heterodimer. Involved in transcription elongation and genome stability. Functionally, splice factor that is required for the first ATP-dependent step in spliceosome assembly and for the interaction of U2 snRNP with the branchpoint. Has both RNA-stimulated ATP binding/hydrolysis activity and ATP-dependent RNA unwinding activity. Even with the stimulation of RNA, the ATPase activity is weak. Can only hydrolyze ATP but not other NTPs. The RNA stimulation of ATPase activity does not have a strong preference for the sequence and length of the RNA. However, ssRNA stimulates the ATPase activity much more strongly than dsRNA. Can unwind 5' or 3' overhangs or blunt end RNA duplexes in vitro. The ATPase and helicase activities are not influenced by U2AF2; the effect of ALYREF/THOC4 is reported conflictingly with [PubMed:23299939] reporting a stimulatory effect. In terms of biological role, (Microbial infection) The TREX complex is essential for the export of Kaposi's sarcoma-associated herpesvirus (KSHV) intronless mRNAs and infectious virus production. This Homo sapiens (Human) protein is Spliceosome RNA helicase DDX39B.